Here is a 1204-residue protein sequence, read N- to C-terminus: Major DNA-binding protein (1204 aa).

Residues 289 to 314 (SGTTTARGARRNDVNSTSKPSPSGGF) are disordered. The segment at 497–510 (CSLCEKHTRPVCAH) is a zinc-finger region. 2 short sequence motifs (required for filament formation) span residues 841–842 (FW) and 1146–1148 (FNF). Residues 1177-1204 (LKRPPEDDELFDLSGIPIKHGNITMEMI) are required for nuclear localization.

The protein belongs to the herpesviridae major DNA-binding protein family. As to quaternary structure, homooligomers. Forms double-helical filaments necessary for the formation of replication compartments within the host nucleus. Interacts with the origin-binding protein. Interacts with the helicase primase complex; this interaction stimulates primer synthesis activity of the helicase-primase complex. Interacts with the DNA polymerase. Interacts with the alkaline exonuclease; this interaction increases its nuclease processivity.

The protein resides in the host nucleus. In terms of biological role, plays several crucial roles in viral infection. Participates in the opening of the viral DNA origin to initiate replication by interacting with the origin-binding protein. May disrupt loops, hairpins and other secondary structures present on ssDNA to reduce and eliminate pausing of viral DNA polymerase at specific sites during elongation. Promotes viral DNA recombination by performing strand-transfer, characterized by the ability to transfer a DNA strand from a linear duplex to a complementary single-stranded DNA circle. Can also catalyze the renaturation of complementary single strands. Additionally, reorganizes the host cell nucleus, leading to the formation of prereplicative sites and replication compartments. This process is driven by the protein which can form double-helical filaments in the absence of DNA. The sequence is that of Major DNA-binding protein from Homo sapiens (Human).